The primary structure comprises 946 residues: Protein translocase subunit SecA (946 aa).

Residues glutamine 90, 108–112, and aspartate 509 each bind ATP; that span reads GEGKT.

It belongs to the SecA family. As to quaternary structure, monomer and homodimer. Part of the essential Sec protein translocation apparatus which comprises SecA, SecYEG and auxiliary proteins SecDF. Other proteins may also be involved.

The protein resides in the cell inner membrane. It localises to the cellular thylakoid membrane. Its subcellular location is the cytoplasm. It catalyses the reaction ATP + H2O + cellular proteinSide 1 = ADP + phosphate + cellular proteinSide 2.. Functionally, part of the Sec protein translocase complex. Interacts with the SecYEG preprotein conducting channel. Has a central role in coupling the hydrolysis of ATP to the transfer of proteins into and across the cell membrane, serving as an ATP-driven molecular motor driving the stepwise translocation of polypeptide chains across the membrane. Its function is as follows. Probably participates in protein translocation into and across both the cytoplasmic and thylakoid membranes in cyanobacterial cells. In Synechococcus sp. (strain RCC307), this protein is Protein translocase subunit SecA.